The sequence spans 318 residues: tRNA dimethylallyltransferase (318 aa).

13–20 (GPTAVGKT) contacts ATP. A substrate-binding site is contributed by 15-20 (TAVGKT). The tract at residues 38 to 41 (DSMQ) is interaction with substrate tRNA.

The protein belongs to the IPP transferase family. Monomer. Requires Mg(2+) as cofactor.

It carries out the reaction adenosine(37) in tRNA + dimethylallyl diphosphate = N(6)-dimethylallyladenosine(37) in tRNA + diphosphate. Its function is as follows. Catalyzes the transfer of a dimethylallyl group onto the adenine at position 37 in tRNAs that read codons beginning with uridine, leading to the formation of N6-(dimethylallyl)adenosine (i(6)A). The sequence is that of tRNA dimethylallyltransferase from Bacillus pumilus (strain SAFR-032).